The sequence spans 117 residues: Protein TCL1B2 (117 aa).

This sequence belongs to the TCL1 family.

The polypeptide is Protein TCL1B2 (Tcl1b2) (Mus musculus (Mouse)).